The sequence spans 510 residues: Gallate 1-beta-glucosyltransferase (510 aa).

H19 acts as the Proton acceptor in catalysis. H19 lines the an anthocyanidin pocket. Residues Q343, H358, W361, N362, S363, and E366 each coordinate UDP-alpha-D-glucose. G381 contacts an anthocyanidin. Residues D382 and Q383 each coordinate UDP-alpha-D-glucose.

Belongs to the UDP-glycosyltransferase family. In terms of tissue distribution, expressed in swelling buds and young leaves.

The catalysed reaction is 3,4,5-trihydroxybenzoate + UDP-alpha-D-glucose = 1-O-galloyl-beta-D-glucose + UDP. The enzyme catalyses vanillate + UDP-alpha-D-glucose = 1-O-(4-hydroxy-3-methoxybenzoyl)-beta-D-glucose + UDP. It catalyses the reaction 3,4-dihydroxybenzoate + UDP-alpha-D-glucose = 1-O-(3,4-dihydroxy-benzoyl)-beta-D-glucose + UDP. Its function is as follows. Glucosyltransferase that catalyzes the formation of 1-O-beta-D-glucose esters with hydroxybenzoic acids as preferred glucosyl acceptors. Has the highest activity with 3,4-dihydroxybenzoate, vanillate and gallate in vitro. Gallate is the predicted native substrate of the enzyme, which thus catalyzes the formation of 1-O-galloyl-beta-D-glucose, the first committed step of gallotannin biosynthesis. This chain is Gallate 1-beta-glucosyltransferase, found in Quercus robur (English oak).